The sequence spans 160 residues: Succinate dehydrogenase assembly factor 2-A, mitochondrial (160 aa).

A mitochondrion-targeting transit peptide spans 1 to 30 (MLRQLKLTLNISRWIFMPWQRQASASSSQV).

This sequence belongs to the SDHAF2 family. In terms of assembly, interacts with the flavoprotein subunit within the SDH catalytic dimer.

The protein localises to the mitochondrion matrix. Plays an essential role in the assembly of succinate dehydrogenase (SDH), an enzyme complex (also referred to as respiratory complex II) that is a component of both the tricarboxylic acid (TCA) cycle and the mitochondrial electron transport chain, and which couples the oxidation of succinate to fumarate with the reduction of ubiquinone (coenzyme Q) to ubiquinol. Required for flavinylation (covalent attachment of FAD) of the flavoprotein subunit of the SDH catalytic dimer. This is Succinate dehydrogenase assembly factor 2-A, mitochondrial from Drosophila persimilis (Fruit fly).